The chain runs to 288 residues: Polyketide biosynthesis malonyl CoA-acyl carrier protein transacylase PksC (288 aa).

Residues S87 and H193 contribute to the active site.

This sequence belongs to the FabD family.

It localises to the cytoplasm. The enzyme catalyses holo-[ACP] + malonyl-CoA = malonyl-[ACP] + CoA. It functions in the pathway antibiotic biosynthesis; bacillaene biosynthesis. Functionally, involved in some intermediate steps for the synthesis of the antibiotic polyketide bacillaene which is involved in secondary metabolism. It catalyzes the transfer of the malonyl-CoA group to the acyl-carrier-protein AcpK (Mal-AcpK). The protein is Polyketide biosynthesis malonyl CoA-acyl carrier protein transacylase PksC (pksC) of Bacillus subtilis (strain 168).